The chain runs to 281 residues: Bifunctional protein FolD (281 aa).

NADP(+)-binding positions include 165–167, Thr-192, and Val-233; that span reads GRG.

The protein belongs to the tetrahydrofolate dehydrogenase/cyclohydrolase family. As to quaternary structure, homodimer.

It catalyses the reaction (6R)-5,10-methylene-5,6,7,8-tetrahydrofolate + NADP(+) = (6R)-5,10-methenyltetrahydrofolate + NADPH. The enzyme catalyses (6R)-5,10-methenyltetrahydrofolate + H2O = (6R)-10-formyltetrahydrofolate + H(+). It participates in one-carbon metabolism; tetrahydrofolate interconversion. Catalyzes the oxidation of 5,10-methylenetetrahydrofolate to 5,10-methenyltetrahydrofolate and then the hydrolysis of 5,10-methenyltetrahydrofolate to 10-formyltetrahydrofolate. In Mycobacterium bovis (strain BCG / Tokyo 172 / ATCC 35737 / TMC 1019), this protein is Bifunctional protein FolD.